We begin with the raw amino-acid sequence, 669 residues long: Alpha-1,6-mannosylglycoprotein 6-beta-N-acetylglucosaminyltransferase (669 aa).

Residues 1 to 7 are Cytoplasmic-facing; that stretch reads MRRRHRC. The helical; Signal-anchor for type II membrane protein transmembrane segment at 8 to 28 threads the bilayer; it reads VALLFIFSAFITPLGFFYYTI. Residues 29-669 lie on the Lumenal side of the membrane; the sequence is SNESKRYSEE…EQHAICKKCL (641 aa). N-linked (GlcNAc...) asparagine glycosylation is found at asparagine 30, asparagine 412, asparagine 437, and asparagine 626.

Belongs to the glycosyltransferase 18 family. In terms of tissue distribution, expressed in a complex subset of neurons in larvae and in the spermathecal and pharyngeal-intestinal valves and certain vulval cells of adults.

It localises to the golgi apparatus membrane. It catalyses the reaction N(4)-{beta-D-GlcNAc-(1-&gt;2)-[beta-D-GlcNAc-(1-&gt;4)]-alpha-D-Man-(1-&gt;3)-[beta-D-GlcNAc-(1-&gt;2)-alpha-D-Man-(1-&gt;6)]-beta-D-Man-(1-&gt;4)-beta-D-GlcNAc-(1-&gt;4)-beta-D-GlcNAc}-L-asparaginyl-[protein] + UDP-N-acetyl-alpha-D-glucosamine = N(4)-{beta-D-GlcNAc-(1-&gt;2)-[beta-D-GlcNAc-(1-&gt;4)]-alpha-D-Man-(1-&gt;3)-[beta-D-GlcNAc-(1-&gt;2)-[beta-D-GlcNAc-(1-&gt;6)]-alpha-D-Man-(1-&gt;6)]-beta-D-Man-(1-&gt;4)-beta-D-GlcNAc-(1-&gt;4)-beta-D-GlcNAc}-L-asparaginyl-[protein] + UDP + H(+). The protein operates within protein modification; protein glycosylation. Its function is as follows. Catalyzes the addition of N-acetylglucosamine (GlcNAc) in beta 1-6 linkage to the alpha-linked mannose of biantennary N-linked oligosaccharides. This Caenorhabditis elegans protein is Alpha-1,6-mannosylglycoprotein 6-beta-N-acetylglucosaminyltransferase (gly-2).